The sequence spans 304 residues: tRNA pseudouridine synthase B (304 aa).

Catalysis depends on Asp-38, which acts as the Nucleophile.

Belongs to the pseudouridine synthase TruB family. Type 1 subfamily.

It carries out the reaction uridine(55) in tRNA = pseudouridine(55) in tRNA. Functionally, responsible for synthesis of pseudouridine from uracil-55 in the psi GC loop of transfer RNAs. In Geobacter sulfurreducens (strain ATCC 51573 / DSM 12127 / PCA), this protein is tRNA pseudouridine synthase B.